The sequence spans 177 residues: Large ribosomal subunit protein uL6 (177 aa).

Belongs to the universal ribosomal protein uL6 family. Part of the 50S ribosomal subunit.

Its function is as follows. This protein binds to the 23S rRNA, and is important in its secondary structure. It is located near the subunit interface in the base of the L7/L12 stalk, and near the tRNA binding site of the peptidyltransferase center. The protein is Large ribosomal subunit protein uL6 of Edwardsiella ictaluri (strain 93-146).